We begin with the raw amino-acid sequence, 654 residues long: RING finger protein 112 (654 aa).

The segment at 80-121 (CSICLERLREPISLDCGHDFCIRCFSTHRIPGCELPCCPECR) adopts an RING-type zinc-finger fold. Residues 154-654 (AVRAERLLLV…GDREPLLQEE (501 aa)) form an interaction with ZBTB16 region. Residues 189–420 (DTPVCLLAVL…YILDVLSTAP (232 aa)) enclose the GB1/RHD3-type G domain. GTP is bound at residue 340–341 (RD). 2 consecutive transmembrane segments (helical) span residues 570-590 (LAAV…GVVG) and 603-623 (GMVA…GGGV).

Belongs to the TRAFAC class dynamin-like GTPase superfamily. GB1/RHD3 GTPase family. GB1 subfamily. As to quaternary structure, self-associates. Interacts with SP1 in an oxidative stress-regulated manner. Interacts with SIGMAR1 in an oxidative stress-regulated manner. Interacts with ZBTB16 (via C2H2-type zinc finger domains 1 and 2). In terms of processing, auto-ubiquitinated. In terms of tissue distribution, expressed in most of the brain areas, including cortex, striatum, hippocampus, thalamus, and cerebellum (at protein level). Expressed in lateral amygdaloid nucleus, and ventromedial hypothalamus. Also expressed strongly in the marginal zone of brain vesicles, optic stalk, and cartilage primordium.

The protein localises to the membrane. The protein resides in the cytoplasm. Its subcellular location is the nucleus. It is found in the nuclear body. It localises to the nucleoplasm. The protein localises to the endosome. The protein resides in the cytoplasmic vesicle. Its subcellular location is the secretory vesicle. It is found in the synaptic vesicle. It localises to the postsynaptic density. The protein localises to the perikaryon. The protein resides in the cell projection. Its subcellular location is the neuron projection. The enzyme catalyses S-ubiquitinyl-[E2 ubiquitin-conjugating enzyme]-L-cysteine + [acceptor protein]-L-lysine = [E2 ubiquitin-conjugating enzyme]-L-cysteine + N(6)-ubiquitinyl-[acceptor protein]-L-lysine.. Its pathway is protein modification; protein ubiquitination. In terms of biological role, E3 ubiquitin-protein ligase that plays an important role in neuronal differentiation, including neurogenesis and gliogenesis, during brain development. During embryonic development initiates neuronal differentiation by inducing cell cycle arrest at the G0/G1 phase through up-regulation of cell-cycle regulatory proteins. Plays a role not only in the fetal period during the development of the nervous system, but also in the adult brain, where it is involved in the maintenance of neural functions and protection of the nervous tissue cells from oxidative stress-induced damage. Exhibits GTPase and E3 ubiquitin-protein ligase activities. Regulates dendritic spine density and synaptic neurotransmission; its ability to hydrolyze GTP is involved in the maintenance of dendritic spine density. The sequence is that of RING finger protein 112 (Rnf112) from Mus musculus (Mouse).